A 197-amino-acid polypeptide reads, in one-letter code: ATP-dependent Clp protease proteolytic subunit 2 (197 aa).

Catalysis depends on S96, which acts as the Nucleophile. H121 is a catalytic residue.

This sequence belongs to the peptidase S14 family. Fourteen ClpP subunits assemble into 2 heptameric rings which stack back to back to give a disk-like structure with a central cavity, resembling the structure of eukaryotic proteasomes.

The protein localises to the cytoplasm. It carries out the reaction Hydrolysis of proteins to small peptides in the presence of ATP and magnesium. alpha-casein is the usual test substrate. In the absence of ATP, only oligopeptides shorter than five residues are hydrolyzed (such as succinyl-Leu-Tyr-|-NHMec, and Leu-Tyr-Leu-|-Tyr-Trp, in which cleavage of the -Tyr-|-Leu- and -Tyr-|-Trp bonds also occurs).. Cleaves peptides in various proteins in a process that requires ATP hydrolysis. Has a chymotrypsin-like activity. Plays a major role in the degradation of misfolded proteins. The polypeptide is ATP-dependent Clp protease proteolytic subunit 2 (Synechococcus sp. (strain CC9605)).